Here is a 220-residue protein sequence, read N- to C-terminus: Fructose-6-phosphate aldolase 2 (220 aa).

Lys85 functions as the Schiff-base intermediate with substrate in the catalytic mechanism.

This sequence belongs to the transaldolase family. Type 3A subfamily. In terms of assembly, homodecamer.

It is found in the cytoplasm. It catalyses the reaction beta-D-fructose 6-phosphate = dihydroxyacetone + D-glyceraldehyde 3-phosphate. Functionally, catalyzes the reversible formation of fructose 6-phosphate from dihydroxyacetone and D-glyceraldehyde 3-phosphate via an aldolization reaction. Can utilize hydroxyacetone as an alternative donor substrate. Is also able to catalyze the direct self-aldol addition of glycolaldehyde. Is less catalytically efficient than the isozyme FsaA. Does not display transaldolase activity. In Escherichia coli (strain K12), this protein is Fructose-6-phosphate aldolase 2 (fsaB).